A 1261-amino-acid polypeptide reads, in one-letter code: SNF2 domain-containing protein CLASSY 2 (1261 aa).

Positions 458–479 (FQKRTSRSSRSVAPKTEDSDEP) are disordered. The region spanning 704 to 904 (DPTSGNIGGC…FNTLCLARPK (201 aa)) is the Helicase ATP-binding domain. Residue 717 to 724 (HSPGAGKT) participates in ATP binding. The DEAH box signature appears at 855 to 858 (DEGH). The Helicase C-terminal domain maps to 1067–1232 (FVLNLIFRVV…DPSLWQAEKI (166 aa)).

The protein belongs to the helicase family. As to quaternary structure, interacts with NRPD1 and SHH1.

It localises to the nucleus. Functionally, probable chromatin remodeling factor. The sequence is that of SNF2 domain-containing protein CLASSY 2 (CLSY2) from Arabidopsis thaliana (Mouse-ear cress).